A 24-amino-acid polypeptide reads, in one-letter code: Coenzyme PQQ synthesis protein A (24 aa).

The segment at residues 16 to 20 (EVTMY) is a cross-link (pyrroloquinoline quinone (Glu-Tyr)).

It belongs to the PqqA family.

It participates in cofactor biosynthesis; pyrroloquinoline quinone biosynthesis. Required for coenzyme pyrroloquinoline quinone (PQQ) biosynthesis. PQQ is probably formed by cross-linking a specific glutamate to a specific tyrosine residue and excising these residues from the peptide. The protein is Coenzyme PQQ synthesis protein A of Methylococcus capsulatus (strain ATCC 33009 / NCIMB 11132 / Bath).